We begin with the raw amino-acid sequence, 635 residues long: Elongation factor 4 (635 aa).

The tr-type G domain maps to 11–193; the sequence is EKIRNFSIIA…QIVEKVPAPT (183 aa). Residues 23-28 and 140-143 each bind GTP; these read DHGKST and NKID.

Belongs to the TRAFAC class translation factor GTPase superfamily. Classic translation factor GTPase family. LepA subfamily.

It is found in the cell membrane. The catalysed reaction is GTP + H2O = GDP + phosphate + H(+). Its function is as follows. Required for accurate and efficient protein synthesis under certain stress conditions. May act as a fidelity factor of the translation reaction, by catalyzing a one-codon backward translocation of tRNAs on improperly translocated ribosomes. Back-translocation proceeds from a post-translocation (POST) complex to a pre-translocation (PRE) complex, thus giving elongation factor G a second chance to translocate the tRNAs correctly. Binds to ribosomes in a GTP-dependent manner. The chain is Elongation factor 4 from Streptococcus pyogenes serotype M12 (strain MGAS2096).